The primary structure comprises 860 residues: Nitrogen regulatory protein areA (860 aa).

Basic residues predominate over residues 1-14; the sequence is MDGIHHGGHGRARP. Disordered stretches follow at residues 1 to 24, 116 to 159, 174 to 193, 559 to 600, and 612 to 658; these read MDGIHHGGHGRARPSHPMAFPDFD, KERE…TSDP, EHSSHPIDRHFTATPTGSIP, GPPE…RTAS, and LNGS…AGPT. Residues 122 to 144 show a composition bias toward polar residues; it reads ARASETLSPTPSGIAQMRLSDQP. The segment covering 174-184 has biased composition (basic and acidic residues); it reads EHSSHPIDRHF. The segment covering 577–587 has biased composition (polar residues); the sequence is ASVSEVRNQNQ. The segment at 660–684 adopts a GATA-type zinc-finger fold; it reads CTNCFTQTTPLWRRNPEGQPLCNAC. Residues 706–850 are disordered; sequence KRNRSSASTL…HNIAGGQGAS (145 aa). 2 stretches are compositionally biased toward polar residues: residues 710 to 719 and 732 to 746; these read SSASTLAVGT and IQHAPSTSISSRMNT. 3 stretches are compositionally biased toward low complexity: residues 747–758, 766–791, and 813–840; these read SESPPSMNGSSS, PIAAAPPKSGPPAGVAQARAGVQVAP, and KSAAPPSRSKVLPLAPAMAPPAAANPAN.

Its subcellular location is the nucleus. Major nitrogen regulatory protein. The chain is Nitrogen regulatory protein areA (AREA) from Penicillium roqueforti.